The following is a 185-amino-acid chain: Homeobox expressed in ES cells 1 (185 aa).

Residues 108 to 167 (GRRPRTAFTQNQIEVLENVFRVNCYPGIDIREDLAQKLNLEEDRIQIWFQNRRAKLKRSH) constitute a DNA-binding region (homeobox).

The protein belongs to the ANF homeobox family. Can form heterodimers with PROP1 in binding to DNA. Interacts with TLE1.

It is found in the nucleus. Required for the normal development of the forebrain, eyes and other anterior structures such as the olfactory placodes and pituitary gland. Possible transcriptional repressor. Binds to the palindromic PIII sequence, 5'-AGCTTGAGTCTAATTGAATTAACTGTAC-3'. HESX1 and PROP1 bind as heterodimers on this palindromic site, and, in vitro, HESX1 can antagonize PROP1 activation. This Pan paniscus (Pygmy chimpanzee) protein is Homeobox expressed in ES cells 1 (HESX1).